The primary structure comprises 465 residues: Hexokinase-4 (465 aa).

One can recognise a Hexokinase domain in the interval 10–454 (ATKKEKVEQI…SGRGAALVSA (445 aa)). Residues 67-203 (EGSEVGDFLS…DFEMDVVAMV (137 aa)) are hexokinase small subdomain. Position 78–83 (78–83 (DLGGTN)) interacts with ATP. Substrate-binding positions include 151–152 (SF), 168–169 (TK), and 204–205 (ND). The tract at residues 204–443 (NDTVATMISC…CEITFIESEE (240 aa)) is hexokinase large subdomain. Thr-228 provides a ligand contact to ATP. Residues Asn-231, Glu-256, and Glu-290 each contribute to the substrate site. Residues 295–296 (GK), 332–336 (TRFVS), and 411–415 (SVYKL) contribute to the ATP site.

This sequence belongs to the hexokinase family. In terms of assembly, monomer. Interacts with MIDN; the interaction occurs preferentially at low glucose levels and results in inhibition of hexokinase activity. Interacts with GCKR; leading to sequestration in the nucleus.

The protein localises to the cytoplasm. It localises to the nucleus. The protein resides in the mitochondrion. It catalyses the reaction a D-hexose + ATP = a D-hexose 6-phosphate + ADP + H(+). It carries out the reaction D-fructose + ATP = D-fructose 6-phosphate + ADP + H(+). The catalysed reaction is D-glucose + ATP = D-glucose 6-phosphate + ADP + H(+). The enzyme catalyses D-mannose + ATP = D-mannose 6-phosphate + ADP + H(+). It functions in the pathway carbohydrate metabolism; hexose metabolism. The protein operates within carbohydrate degradation; glycolysis; D-glyceraldehyde 3-phosphate and glycerone phosphate from D-glucose: step 1/4. With respect to regulation, subject to allosteric regulation. Low glucose and high fructose-6-phosphate triggers association with the inhibitor GCKR followed by sequestration in the nucleus. Catalyzes the phosphorylation of hexose, such as D-glucose, D-fructose and D-mannose, to hexose 6-phosphate (D-glucose 6-phosphate, D-fructose 6-phosphate and D-mannose 6-phosphate, respectively). Compared to other hexokinases, has a weak affinity for D-glucose, and is effective only when glucose is abundant. Mainly expressed in pancreatic beta cells and the liver and constitutes a rate-limiting step in glucose metabolism in these tissues. Since insulin secretion parallels glucose metabolism and the low glucose affinity of GCK ensures that it can change its enzymatic activity within the physiological range of glucose concentrations, GCK acts as a glucose sensor in the pancreatic beta cell. In pancreas, plays an important role in modulating insulin secretion. In liver, helps to facilitate the uptake and conversion of glucose by acting as an insulin-sensitive determinant of hepatic glucose usage. Required to provide D-glucose 6-phosphate for the synthesis of glycogen. Mediates the initial step of glycolysis by catalyzing phosphorylation of D-glucose to D-glucose 6-phosphate. The sequence is that of Hexokinase-4 from Mus musculus (Mouse).